A 261-amino-acid chain; its full sequence is tRNA pseudouridine synthase A (261 aa).

The active-site Nucleophile is the Asp-51. Residue Tyr-109 participates in substrate binding.

This sequence belongs to the tRNA pseudouridine synthase TruA family. In terms of assembly, homodimer.

It catalyses the reaction uridine(38/39/40) in tRNA = pseudouridine(38/39/40) in tRNA. Functionally, formation of pseudouridine at positions 38, 39 and 40 in the anticodon stem and loop of transfer RNAs. The sequence is that of tRNA pseudouridine synthase A from Shewanella woodyi (strain ATCC 51908 / MS32).